Reading from the N-terminus, the 347-residue chain is Quinolinate synthase (347 aa).

Residues His-47 and Ser-68 each contribute to the iminosuccinate site. [4Fe-4S] cluster is bound at residue Cys-113. Iminosuccinate-binding positions include 139 to 141 (YAN) and Ser-156. Position 200 (Cys-200) interacts with [4Fe-4S] cluster. Residues 226 to 228 (HPE) and Thr-243 each bind iminosuccinate. A [4Fe-4S] cluster-binding site is contributed by Cys-297.

Belongs to the quinolinate synthase family. Type 1 subfamily. The cofactor is [4Fe-4S] cluster.

The protein localises to the cytoplasm. It catalyses the reaction iminosuccinate + dihydroxyacetone phosphate = quinolinate + phosphate + 2 H2O + H(+). Its pathway is cofactor biosynthesis; NAD(+) biosynthesis; quinolinate from iminoaspartate: step 1/1. Its function is as follows. Catalyzes the condensation of iminoaspartate with dihydroxyacetone phosphate to form quinolinate. This is Quinolinate synthase from Escherichia coli O139:H28 (strain E24377A / ETEC).